Reading from the N-terminus, the 393-residue chain is Putative mitogen-activated protein kinase kinase kinase 7-like (393 aa).

One can recognise a Protein kinase domain in the interval 11–266 (KLSEKFLGAG…PSMKEIEKFL (256 aa)). ATP-binding positions include 17–25 (LGAGSGGAV) and lysine 38. Aspartate 133 serves as the catalytic Proton acceptor. Residues 339 to 379 (AAADGDREVRRAEKDTERETSRAAHNGERETRRAGQDVGRE) are disordered.

Belongs to the protein kinase superfamily. STE Ser/Thr protein kinase family. MAP kinase kinase kinase subfamily. Mg(2+) is required as a cofactor.

The catalysed reaction is L-seryl-[protein] + ATP = O-phospho-L-seryl-[protein] + ADP + H(+). It carries out the reaction L-threonyl-[protein] + ATP = O-phospho-L-threonyl-[protein] + ADP + H(+). The sequence is that of Putative mitogen-activated protein kinase kinase kinase 7-like (Takl1) from Drosophila melanogaster (Fruit fly).